We begin with the raw amino-acid sequence, 507 residues long: MTTVTIKPGAMVLADWADIWRGATIRIDPEAKAGVDAAAATVDRLIASGEAVYGLNTGFGKLAQTRIADDELATLQERLVLSHAAGIGEALDSRIVRLVMALKLASLGRGASGVRWTTIAAMQALLDADVLPVIPSQGSVGASGDLAPLAHMSAALIGAGEATWQGQRMPASDALAKAGLKPVQLGPKEGLALLNGTQTSTALALAGLFEVEAGFQAALVSGALSVDAAKGSVAPFDPRIHSLRGHPGQIDVAAALRGLLDGSGILSSHEGCEKIQDPYCLRCQPQVMGAVLDLLRQAGAVLEREANAVTDNPLIFTDTDEAISGGNFHAEPVAFAADQIAMAACEIGSICERRIALLTDPAVSGLPAFLTPNPGINSGFMIAHVTAAALVSENKQKAYPASVDSIPTSANQEDHVSMATHGAFRLLKMAENLHVVVGIELLCGAQGTDFHAGLTSSPTLETAKATLRKQVPAYGDDRYFATDIANARDLVTGRGLVADAGTLPGIA.

Positions 142–144 (ASG) form a cross-link, 5-imidazolinone (Ala-Gly). Position 143 is a 2,3-didehydroalanine (Ser) (S143).

The protein belongs to the PAL/histidase family. Contains an active site 4-methylidene-imidazol-5-one (MIO), which is formed autocatalytically by cyclization and dehydration of residues Ala-Ser-Gly.

It is found in the cytoplasm. It carries out the reaction L-histidine = trans-urocanate + NH4(+). It participates in amino-acid degradation; L-histidine degradation into L-glutamate; N-formimidoyl-L-glutamate from L-histidine: step 1/3. The sequence is that of Histidine ammonia-lyase from Maricaulis maris (strain MCS10) (Caulobacter maris).